The sequence spans 110 residues: MELTVESLDSPALTKAQLADLLFDEIGLNKRESKEMVDAFFELISQSLVTGEDVKLSGFGNFQIRTKAPRPGRNPRTGEAIPIEARRVVTFHASSKLKEQIQEGTTGSAS.

It belongs to the bacterial histone-like protein family. As to quaternary structure, heterodimer of an alpha and a beta chain.

In terms of biological role, this protein is one of the two subunits of integration host factor, a specific DNA-binding protein that functions in genetic recombination as well as in transcriptional and translational control. This is Integration host factor subunit alpha from Delftia acidovorans (strain DSM 14801 / SPH-1).